A 215-amino-acid polypeptide reads, in one-letter code: Protein slowmo (215 aa).

In terms of domain architecture, PRELI/MSF1 spans 1–170 (MKIWTSEHIF…VIGLINTEVK (170 aa)).

The protein belongs to the slowmo family. In terms of tissue distribution, expressed in specific tissues such as the developing central nervous system (CNS) and both the male and female germline. In the CNS, it is restricted in a subset of cells during embryogenesis and early larval development. In embryos, it is also expressed in salivary glands. In the testis, expressed in somatic cyst cells throughout the distal region where the mitotic cysts develop, extending through to meiotic cysts.

The protein resides in the mitochondrion. In terms of biological role, required to regulate peristaltic movement and also for germline proliferation in males and females. The sequence is that of Protein slowmo (slmo) from Drosophila melanogaster (Fruit fly).